Consider the following 370-residue polypeptide: Cobalt-precorrin-5B C(1)-methyltransferase (370 aa).

The protein belongs to the CbiD family.

The enzyme catalyses Co-precorrin-5B + S-adenosyl-L-methionine = Co-precorrin-6A + S-adenosyl-L-homocysteine. It functions in the pathway cofactor biosynthesis; adenosylcobalamin biosynthesis; cob(II)yrinate a,c-diamide from sirohydrochlorin (anaerobic route): step 6/10. Functionally, catalyzes the methylation of C-1 in cobalt-precorrin-5B to form cobalt-precorrin-6A. The chain is Cobalt-precorrin-5B C(1)-methyltransferase from Pseudomonas savastanoi pv. phaseolicola (strain 1448A / Race 6) (Pseudomonas syringae pv. phaseolicola (strain 1448A / Race 6)).